A 62-amino-acid polypeptide reads, in one-letter code: Large ribosomal subunit protein eL24 (62 aa).

Residues C6, C9, C32, and C36 each contribute to the Zn(2+) site. Residues 6–36 (CYFCGKMLEPGTGKLYVKKDGSTYFMCSSKC) form a C4-type zinc finger.

The protein belongs to the eukaryotic ribosomal protein eL24 family. In terms of assembly, part of the 50S ribosomal subunit. Forms a cluster with proteins L3 and L14. Zn(2+) is required as a cofactor.

Functionally, binds to the 23S rRNA. The polypeptide is Large ribosomal subunit protein eL24 (Methanosarcina acetivorans (strain ATCC 35395 / DSM 2834 / JCM 12185 / C2A)).